Reading from the N-terminus, the 131-residue chain is UPF0102 protein YraN (131 aa).

The disordered stretch occupies residues 1–20 (MATVPTRSGSPRQLTTKQTG).

It belongs to the UPF0102 family.

This is UPF0102 protein YraN from Escherichia coli O139:H28 (strain E24377A / ETEC).